The sequence spans 366 residues: Nitronate monooxygenase (366 aa).

Residues Asn-74, Gln-181, Gly-186, Gly-223, and 242–245 contribute to the FMN site; that span reads QLGT.

This sequence belongs to the nitronate monooxygenase family. NMO class I subfamily. It depends on FMN as a cofactor.

It catalyses the reaction 3 propionate 3-nitronate + 3 O2 + H2O = 3 3-oxopropanoate + 2 nitrate + nitrite + H2O2 + 3 H(+). Functionally, nitronate monooxygenase that uses molecular oxygen to catalyze the oxidative denitrification of alkyl nitronates. Acts on propionate 3-nitronate (P3N), the presumed physiological substrate. Is likely involved in the degradation of P3N, that allows B.phytofirmans PsJN to grow on 3-nitropropionate/P3N as the sole source of nitrogen and carbon. Also probably functions in the detoxification of P3N, a metabolic poison produced by plants and fungi as a defense mechanism. Cannot oxidize nitroalkanes such as 3-nitropropionate, nitroethane, or 1-nitropropane. This chain is Nitronate monooxygenase, found in Paraburkholderia phytofirmans (strain DSM 17436 / LMG 22146 / PsJN) (Burkholderia phytofirmans).